Here is a 1574-residue protein sequence, read N- to C-terminus: Synaptojanin-1 (1574 aa).

The region spanning 119–442 is the SAC domain; that stretch reads VRKVLNSGNF…GDSISKIYAG (324 aa). S820 and S830 each carry phosphoserine. In terms of domain architecture, RRM spans 894–971; it reads GTVLVSIKSS…RTITITLKSP (78 aa). Low complexity predominate over residues 1029-1054; it reads HLQPSSSSGLGTSPSSSPRTSPCQSP. The interval 1029-1327 is disordered; sequence HLQPSSSSGL…GVKQEPTLKS (299 aa). S1053 is subject to Phosphoserine. Residues 1080 to 1100 show a composition bias toward polar residues; it reads SSQGSPVDTQPAAQKDSSQTL. The span at 1105 to 1127 shows a compositional bias: pro residues; the sequence is PPPPRPVAPPARPAPPQRPPPPS. Residues S1147 and S1175 each carry the phosphoserine modification. R1198 carries the omega-N-methylarginine modification. T1217 carries the post-translational modification Phosphothreonine. The segment covering 1268–1287 has biased composition (pro residues); sequence TMPPSGPQPNLETPPQPPPR. The span at 1288 to 1307 shows a compositional bias: low complexity; that stretch reads SRSSQSLPSDSSPQLQQEQP. 2 positions are modified to phosphoserine: S1290 and S1350. Phosphothreonine is present on T1354. 2 disordered regions span residues 1363 to 1507 and 1532 to 1574; these read LPSA…SVCP and LPAR…FTER. Polar residues-rich tracts occupy residues 1364–1379, 1393–1402, 1424–1436, and 1472–1484; these read PSAS…SVSC, QESMGSSANP, RVQS…TSWL, and DLQS…TSNP. The 3 X 3 AA repeats of N-P-F stretch occupies residues 1403-1425; sequence FPSLPCRNPFTDRTAAPGNPFRV. Positions 1535–1548 are enriched in pro residues; sequence RRPPPPPPPVPLLP. Residues 1549-1563 show a composition bias toward low complexity; sequence PGTTSSAGPSTTLPS. Over residues 1565 to 1574 the composition is skewed to polar residues; sequence APSTLDFTER.

It belongs to the synaptojanin family. In the central section; belongs to the inositol 1,4,5-trisphosphate 5-phosphatase family. As to quaternary structure, interacts with ASH/GRB2. Interacts with PACSIN1, PACSIN2 and PACSIN3. Interacts with AMPH, SH3GL1, SH3GL2 and SH3GL3. Interacts with MYO1E (via SH3 domain). Interacts with BIN1 and DNM1. Interacts with EPS15.

It is found in the cytoplasm. Its subcellular location is the perinuclear region. The enzyme catalyses a 1,2-diacyl-sn-glycero-3-phospho-(1D-myo-inositol-4,5-bisphosphate) + H2O = a 1,2-diacyl-sn-glycero-3-phospho-(1D-myo-inositol 4-phosphate) + phosphate. In terms of biological role, phosphatase that acts on various phosphoinositides, including phosphatidylinositol 4-phosphate, phosphatidylinositol (4,5)-bisphosphate and phosphatidylinositol (3,4,5)-trisphosphate. Has a role in clathrin-mediated endocytosis. Hydrolyzes PIP2 bound to actin regulatory proteins resulting in the rearrangement of actin filaments downstream of tyrosine kinase and ASH/GRB2. This Mus musculus (Mouse) protein is Synaptojanin-1 (Synj1).